A 103-amino-acid polypeptide reads, in one-letter code: Large ribosomal subunit protein bL21 (103 aa).

Belongs to the bacterial ribosomal protein bL21 family. In terms of assembly, part of the 50S ribosomal subunit. Contacts protein L20.

Its function is as follows. This protein binds to 23S rRNA in the presence of protein L20. The polypeptide is Large ribosomal subunit protein bL21 (Desulforudis audaxviator (strain MP104C)).